Consider the following 145-residue polypeptide: Transcription antitermination protein NusB (145 aa).

The protein belongs to the NusB family.

Functionally, involved in transcription antitermination. Required for transcription of ribosomal RNA (rRNA) genes. Binds specifically to the boxA antiterminator sequence of the ribosomal RNA (rrn) operons. The polypeptide is Transcription antitermination protein NusB (Ruminiclostridium cellulolyticum (strain ATCC 35319 / DSM 5812 / JCM 6584 / H10) (Clostridium cellulolyticum)).